The chain runs to 224 residues: MPTPEKRLRLMQLASNSLPVGGYSWSQGLEWAVEAGWVEDSAAFEHWQQLQMEQSFFAVDLPLLARLYRACEAGDPDSAGRWTAYLLACRETRELRDEERNRGAAFTRLLVDWQPDCPAEWRKLCQQSQLTGMAWLGVRWQISVSDLALSLGYSWIESAVMAGVRLVPYGQLAAQQLIMRLCARYAANMDSALATPDHAIGSATPLASIASARHETQYSRLFRS.

This sequence belongs to the UreF family. In terms of assembly, ureD, UreF and UreG form a complex that acts as a GTP-hydrolysis-dependent molecular chaperone, activating the urease apoprotein by helping to assemble the nickel containing metallocenter of UreC. The UreE protein probably delivers the nickel.

Its subcellular location is the cytoplasm. Its function is as follows. Required for maturation of urease via the functional incorporation of the urease nickel metallocenter. This is Urease accessory protein UreF from Escherichia coli O157:H7.